The primary structure comprises 119 residues: Microtubule nucleation factor SSNA1 (119 aa).

An N-acetylthreonine modification is found at Thr-2. An important for localization to the centrosome region spans residues Thr-2 to Gln-32. Residues Asn-13–Glu-70 adopt a coiled-coil conformation.

Belongs to the SSNA1 family. In terms of assembly, self-associates to form fibrils. Also forms dimers as well as monomers. Interacts with SPAST. As to expression, widely expressed.

It localises to the nucleus. It is found in the cytoplasm. The protein localises to the cytoskeleton. The protein resides in the microtubule organizing center. Its subcellular location is the centrosome. It localises to the centriole. It is found in the midbody. The protein localises to the flagellum basal body. The protein resides in the flagellum axoneme. Its subcellular location is the cell projection. It localises to the axon. Microtubule-binding protein which stabilizes dynamic microtubules by slowing growth and shrinkage at both plus and minus ends and serves as a sensor of microtubule damage, protecting microtubules from the microtubule-severing enzyme SPAST. Induces microtubule branching which is mediated by the formation of long SSNA1 fibrils which guide microtubule protofilaments to split apart from the mother microtubule and form daughter microtubules. Plays a role in axon outgrowth and branching. Required for cell division. The protein is Microtubule nucleation factor SSNA1 of Homo sapiens (Human).